The chain runs to 192 residues: Xanthine phosphoribosyltransferase (192 aa).

Residues Leu20 and Asn27 each contribute to the xanthine site. 128 to 132 (AQGEA) is a 5-phospho-alpha-D-ribose 1-diphosphate binding site. Lys156 contributes to the xanthine binding site.

It belongs to the purine/pyrimidine phosphoribosyltransferase family. Xpt subfamily. Homodimer.

The protein localises to the cytoplasm. The enzyme catalyses XMP + diphosphate = xanthine + 5-phospho-alpha-D-ribose 1-diphosphate. The protein operates within purine metabolism; XMP biosynthesis via salvage pathway; XMP from xanthine: step 1/1. Its function is as follows. Converts the preformed base xanthine, a product of nucleic acid breakdown, to xanthosine 5'-monophosphate (XMP), so it can be reused for RNA or DNA synthesis. The sequence is that of Xanthine phosphoribosyltransferase from Lactobacillus helveticus (strain DPC 4571).